The following is a 312-amino-acid chain: Olfactory receptor 51B2 (312 aa).

Over 1-23 the chain is Extracellular; the sequence is MWPNITAAPFLLTGFPGLEAAHH. N4 carries N-linked (GlcNAc...) asparagine glycosylation. A helical membrane pass occupies residues 24–44; that stretch reads WISIPFFAVYVCILLGNGMLL. Over 45–52 the chain is Cytoplasmic; the sequence is YLIKHDHS. The chain crosses the membrane as a helical span at residues 53 to 73; it reads LHEPMYYFLTMLAGTDLMVTL. Topologically, residues 74–97 are extracellular; the sequence is TTMPTVMGILWVNHREISSVGCFL. C95 and C187 are joined by a disulfide. The chain crosses the membrane as a helical span at residues 98–118; sequence QAYFIHSLSVVESGSLLAMAY. Over 119–137 the chain is Cytoplasmic; that stretch reads DCFIAIRNPLRYASILTNT. A helical transmembrane segment spans residues 138 to 158; the sequence is RVIALGVGVFLRGFVSILPVI. Over 159–194 the chain is Extracellular; that stretch reads LRLFSFSYCKSHVITRAFCLHQEIMRLACADITFNR. A helical membrane pass occupies residues 195-215; sequence LYPVILISLTIFLDCLIILFS. At 216-235 the chain is on the cytoplasmic side; that stretch reads YILILNTVIGIASGEERAKA. The chain crosses the membrane as a helical span at residues 236 to 256; sequence LNTCISHISCVLIFYVTVMGL. At 257-271 the chain is on the extracellular side; the sequence is TFIYRFGKNVPEVVH. The chain crosses the membrane as a helical span at residues 272 to 292; it reads IIMSYIYFLFPPLMNPVIYSI. The Cytoplasmic portion of the chain corresponds to 293–312; the sequence is KTKQIQYGIIRLLSKHRFSS.

The protein belongs to the G-protein coupled receptor 1 family. In terms of processing, ubiquitinated by the CRL2(FEM1A) and CRL2(FEM1C) complexes, which recognize the -Lys-Xaa-Xaa-Arg C-degron at the C-terminus, leading to its degradation.

The protein resides in the cell membrane. Odorant receptor. In Homo sapiens (Human), this protein is Olfactory receptor 51B2 (OR51B2).